The primary structure comprises 484 residues: tRNA sulfurtransferase (484 aa).

Positions 63 to 167 constitute a THUMP domain; it reads QAFGERLACI…GDKLYMVTKR (105 aa). Residues 185-186, lysine 267, glycine 289, and glutamine 298 contribute to the ATP site; that span reads LI. Cysteine 346 and cysteine 458 form a disulfide bridge. The 79-residue stretch at 406–484 folds into the Rhodanese domain; that stretch reads IDTNEVVIDI…GYHNVKVYRP (79 aa). Cysteine 458 serves as the catalytic Cysteine persulfide intermediate.

The protein belongs to the ThiI family.

The protein localises to the cytoplasm. The enzyme catalyses [ThiI sulfur-carrier protein]-S-sulfanyl-L-cysteine + a uridine in tRNA + 2 reduced [2Fe-2S]-[ferredoxin] + ATP + H(+) = [ThiI sulfur-carrier protein]-L-cysteine + a 4-thiouridine in tRNA + 2 oxidized [2Fe-2S]-[ferredoxin] + AMP + diphosphate. It catalyses the reaction [ThiS sulfur-carrier protein]-C-terminal Gly-Gly-AMP + S-sulfanyl-L-cysteinyl-[cysteine desulfurase] + AH2 = [ThiS sulfur-carrier protein]-C-terminal-Gly-aminoethanethioate + L-cysteinyl-[cysteine desulfurase] + A + AMP + 2 H(+). Its pathway is cofactor biosynthesis; thiamine diphosphate biosynthesis. Catalyzes the ATP-dependent transfer of a sulfur to tRNA to produce 4-thiouridine in position 8 of tRNAs, which functions as a near-UV photosensor. Also catalyzes the transfer of sulfur to the sulfur carrier protein ThiS, forming ThiS-thiocarboxylate. This is a step in the synthesis of thiazole, in the thiamine biosynthesis pathway. The sulfur is donated as persulfide by IscS. The chain is tRNA sulfurtransferase from Shewanella oneidensis (strain ATCC 700550 / JCM 31522 / CIP 106686 / LMG 19005 / NCIMB 14063 / MR-1).